Here is a 344-residue protein sequence, read N- to C-terminus: Meiotic recombination protein DMC1 homolog (344 aa).

Residues 1–22 (MMASLKAEETSQMQLVEREEND) form a disordered region. 133–140 (GEFRSGKT) provides a ligand contact to ATP. Arg-235 contacts dsDNA. Residues Arg-235, Phe-238, Arg-241, Arg-247, and Arg-315 each coordinate ssDNA. DsDNA is bound by residues Arg-241 and Arg-247.

Belongs to the RecA family. DMC1 subfamily. Double stacked ring-shaped homooctamer. Interacts with BRCA2A and BRCA2B. Expressed in mitotic and/or meiotic tissues. Expressed in roots, leaves and anthers and carpels of young fower buds.

Its subcellular location is the nucleus. In terms of biological role, may participate in meiotic recombination, specifically in homologous strand assimilation, which is required for the resolution of meiotic double-strand breaks. Mediates interhomolog recombination during meiosis. This is Meiotic recombination protein DMC1 homolog from Arabidopsis thaliana (Mouse-ear cress).